Reading from the N-terminus, the 130-residue chain is uncharacterized protein (130 aa).

This sequence belongs to the HesB/IscA family.

This is an uncharacterized protein from Buchnera aphidicola subsp. Acyrthosiphon pisum (strain APS) (Acyrthosiphon pisum symbiotic bacterium).